The chain runs to 177 residues: Large ribosomal subunit protein uL6 (177 aa).

It belongs to the universal ribosomal protein uL6 family. As to quaternary structure, part of the 50S ribosomal subunit.

In terms of biological role, this protein binds to the 23S rRNA, and is important in its secondary structure. It is located near the subunit interface in the base of the L7/L12 stalk, and near the tRNA binding site of the peptidyltransferase center. This chain is Large ribosomal subunit protein uL6, found in Laribacter hongkongensis (strain HLHK9).